The chain runs to 357 residues: UDP-N-acetylglucosamine--N-acetylmuramyl-(pentapeptide) pyrophosphoryl-undecaprenol N-acetylglucosamine transferase (357 aa).

UDP-N-acetyl-alpha-D-glucosamine is bound by residues 12–14 (TGG), asparagine 124, arginine 162, serine 190, isoleucine 244, 263–268 (ALTVAE), and glutamine 289.

It belongs to the glycosyltransferase 28 family. MurG subfamily.

It localises to the cell inner membrane. The enzyme catalyses di-trans,octa-cis-undecaprenyl diphospho-N-acetyl-alpha-D-muramoyl-L-alanyl-D-glutamyl-meso-2,6-diaminopimeloyl-D-alanyl-D-alanine + UDP-N-acetyl-alpha-D-glucosamine = di-trans,octa-cis-undecaprenyl diphospho-[N-acetyl-alpha-D-glucosaminyl-(1-&gt;4)]-N-acetyl-alpha-D-muramoyl-L-alanyl-D-glutamyl-meso-2,6-diaminopimeloyl-D-alanyl-D-alanine + UDP + H(+). It participates in cell wall biogenesis; peptidoglycan biosynthesis. In terms of biological role, cell wall formation. Catalyzes the transfer of a GlcNAc subunit on undecaprenyl-pyrophosphoryl-MurNAc-pentapeptide (lipid intermediate I) to form undecaprenyl-pyrophosphoryl-MurNAc-(pentapeptide)GlcNAc (lipid intermediate II). The protein is UDP-N-acetylglucosamine--N-acetylmuramyl-(pentapeptide) pyrophosphoryl-undecaprenol N-acetylglucosamine transferase of Alkalilimnicola ehrlichii (strain ATCC BAA-1101 / DSM 17681 / MLHE-1).